Here is a 401-residue protein sequence, read N- to C-terminus: Type 3 secretion system translocon protein SctE (401 aa).

The stretch at 129–160 forms a coiled coil; sequence IQRLHEQNMKKIEENQEKIKETEENAKQVKKS. A run of 2 helical transmembrane segments spans residues 176–196 and 224–244; these read VIVG…AMMV and ILGP…TVMT. Residues 345–379 are a coiled coil; that stretch reads LALNKADMAALQSIIDRLKEELSHLSESHQQVMEL.

It belongs to the SctE/SipB/YopB family. In terms of assembly, the core secretion machinery of the T3SS is composed of approximately 20 different proteins, including cytoplasmic components, a base, an export apparatus and a needle. This subunit is involved in the formation of a pore, called the translocon, in host membrane. Interacts with YopD/SctB. Together with YopD/SctB, forms a multimeric integral membrane complex.

The protein resides in the secreted. It is found in the host membrane. Functionally, component of the type III secretion system (T3SS), also called injectisome, which is used to inject bacterial effector proteins into eukaryotic host cells. YopB/SctE and YopD/SctB are inserted into the host membrane where they form a pore and allow the translocation of effector proteins into the cytosol of target cells. Is an essential virulence determinant. Required for YopE and YopH translocation. Shows membrane disruptive activity in vitro. Interaction with the host cell triggers a signaling response, via activation of the small GTPase Ras, the MAPK kinases ERK and JNK and the nuclear factor NF-kappa-B pathways, and production of the proinflammatory cytokine interleukin-8 (IL-8). YopB/SctE-dependent signaling response is counteracted by YopE, YopH and YopJ in infected host cells. YopB/SctE is directly responsible for signaling and its insertion in the membrane is important to activate the signaling response in the host cell. This chain is Type 3 secretion system translocon protein SctE, found in Yersinia pseudotuberculosis serotype I (strain IP32953).